Consider the following 140-residue polypeptide: Putative nickel-responsive regulator 2 (140 aa).

4 residues coordinate Ni(2+): H77, H88, H90, and C96.

This sequence belongs to the transcriptional regulatory CopG/NikR family. It depends on Ni(2+) as a cofactor.

Its function is as follows. Transcriptional regulator. The chain is Putative nickel-responsive regulator 2 from Methanothermobacter thermautotrophicus (strain ATCC 29096 / DSM 1053 / JCM 10044 / NBRC 100330 / Delta H) (Methanobacterium thermoautotrophicum).